The chain runs to 469 residues: Argininosuccinate lyase (469 aa).

This sequence belongs to the lyase 1 family. Argininosuccinate lyase subfamily.

It is found in the cytoplasm. It carries out the reaction 2-(N(omega)-L-arginino)succinate = fumarate + L-arginine. The protein operates within amino-acid biosynthesis; L-arginine biosynthesis; L-arginine from L-ornithine and carbamoyl phosphate: step 3/3. This chain is Argininosuccinate lyase, found in Burkholderia vietnamiensis (strain G4 / LMG 22486) (Burkholderia cepacia (strain R1808)).